Reading from the N-terminus, the 223-residue chain is Deoxyribose-phosphate aldolase (223 aa).

The Proton donor/acceptor role is filled by D89. K152 serves as the catalytic Schiff-base intermediate with acetaldehyde. K181 acts as the Proton donor/acceptor in catalysis.

Belongs to the DeoC/FbaB aldolase family. DeoC type 1 subfamily.

The protein resides in the cytoplasm. The enzyme catalyses 2-deoxy-D-ribose 5-phosphate = D-glyceraldehyde 3-phosphate + acetaldehyde. The protein operates within carbohydrate degradation; 2-deoxy-D-ribose 1-phosphate degradation; D-glyceraldehyde 3-phosphate and acetaldehyde from 2-deoxy-alpha-D-ribose 1-phosphate: step 2/2. Its function is as follows. Catalyzes a reversible aldol reaction between acetaldehyde and D-glyceraldehyde 3-phosphate to generate 2-deoxy-D-ribose 5-phosphate. The protein is Deoxyribose-phosphate aldolase of Bacillus cytotoxicus (strain DSM 22905 / CIP 110041 / 391-98 / NVH 391-98).